A 364-amino-acid chain; its full sequence is Developmentally-regulated GTP-binding protein 2 (364 aa).

K21 carries the (3S)-3-hydroxylysine modification. The 226-residue stretch at 63–288 folds into the OBG-type G domain; that stretch reads ARVALIGFPS…LLEMLWEYLA (226 aa). GTP is bound by residues 69 to 76, 94 to 98, 115 to 118, 246 to 249, and 269 to 271; these read GFPSVGKS, FTTLT, DLPG, NKID, and SCG. Positions 76 and 96 each coordinate Mg(2+). One can recognise a TGS domain in the interval 288–363; it reads ALTCIYTKKR…EHEDVIQIVK (76 aa).

It belongs to the TRAFAC class OBG-HflX-like GTPase superfamily. OBG GTPase family. In terms of assembly, interacts with RWDD1; this interaction confers protection to polyubiquitination and proteolytic degradation. Interacts with JMJD7; this interaction is direct. Mg(2+) is required as a cofactor. Post-translationally, polyubiquitinated. In terms of processing, hydroxylated (with S stereochemistry) at C-3 of Lys-21 by JMJD7. As to expression, fairly high levels in liver, heart, kidney, and brain. Very low levels in lung, spleen, testis and skeletal muscle.

It is found in the nucleus. It localises to the cytoplasm. The enzyme catalyses GTP + H2O = GDP + phosphate + H(+). Catalyzes the conversion of GTP to GDP through hydrolysis of the gamma-phosphate bond in GTP. When hydroxylated at C-3 of 'Lys-21' by JMJD7, may bind to RNA and play a role in translation. This is Developmentally-regulated GTP-binding protein 2 (Drg2) from Mus musculus (Mouse).